The primary structure comprises 283 residues: Pantothenate synthetase (283 aa).

30-37 contributes to the ATP binding site; the sequence is MGNLHDGH. The active-site Proton donor is histidine 37. Residue glutamine 61 coordinates (R)-pantoate. Glutamine 61 provides a ligand contact to beta-alanine. 149 to 152 is an ATP binding site; that stretch reads GEKD. Residue glutamine 155 coordinates (R)-pantoate. Residue 186–189 coordinates ATP; it reads LSSR.

This sequence belongs to the pantothenate synthetase family. In terms of assembly, homodimer.

It is found in the cytoplasm. The enzyme catalyses (R)-pantoate + beta-alanine + ATP = (R)-pantothenate + AMP + diphosphate + H(+). It participates in cofactor biosynthesis; (R)-pantothenate biosynthesis; (R)-pantothenate from (R)-pantoate and beta-alanine: step 1/1. In terms of biological role, catalyzes the condensation of pantoate with beta-alanine in an ATP-dependent reaction via a pantoyl-adenylate intermediate. The sequence is that of Pantothenate synthetase from Shigella dysenteriae serotype 1 (strain Sd197).